A 600-amino-acid polypeptide reads, in one-letter code: Alanine--tRNA ligase (600 aa).

Positions 463, 467, 565, and 569 each coordinate Zn(2+).

Belongs to the class-II aminoacyl-tRNA synthetase family. Zn(2+) serves as cofactor.

It is found in the cytoplasm. It carries out the reaction tRNA(Ala) + L-alanine + ATP = L-alanyl-tRNA(Ala) + AMP + diphosphate. In terms of biological role, catalyzes the attachment of alanine to tRNA(Ala) in a two-step reaction: alanine is first activated by ATP to form Ala-AMP and then transferred to the acceptor end of tRNA(Ala). Also edits incorrectly charged Ser-tRNA(Ala) and Gly-tRNA(Ala) via its editing domain. The polypeptide is Alanine--tRNA ligase (alaS) (Treponema denticola (strain ATCC 35405 / DSM 14222 / CIP 103919 / JCM 8153 / KCTC 15104)).